The following is a 126-amino-acid chain: Fluoride-specific ion channel FluC (126 aa).

4 consecutive transmembrane segments (helical) span residues 1-21 (MIVI…FGLD), 40-60 (LATL…GGFA), 72-92 (AISI…VATV), and 104-124 (MVNI…GLSL). Na(+) contacts are provided by Gly-79 and Thr-82.

Belongs to the fluoride channel Fluc/FEX (TC 1.A.43) family.

The protein localises to the cell membrane. It carries out the reaction fluoride(in) = fluoride(out). Its activity is regulated as follows. Na(+) is not transported, but it plays an essential structural role and its presence is essential for fluoride channel function. Functionally, fluoride-specific ion channel. Important for reducing fluoride concentration in the cell, thus reducing its toxicity. In Renibacterium salmoninarum (strain ATCC 33209 / DSM 20767 / JCM 11484 / NBRC 15589 / NCIMB 2235), this protein is Fluoride-specific ion channel FluC.